Reading from the N-terminus, the 309-residue chain is Ferrochelatase (309 aa).

The Fe cation site is built by His185 and Glu264.

Belongs to the ferrochelatase family.

The protein localises to the cytoplasm. It catalyses the reaction heme b + 2 H(+) = protoporphyrin IX + Fe(2+). It functions in the pathway porphyrin-containing compound metabolism; protoheme biosynthesis; protoheme from protoporphyrin-IX: step 1/1. In terms of biological role, catalyzes the ferrous insertion into protoporphyrin IX. The protein is Ferrochelatase of Aquifex aeolicus (strain VF5).